The following is a 372-amino-acid chain: 3-dehydroquinate synthase (372 aa).

Residues 113 to 117 (GVIGD), 137 to 138 (TS), K150, K159, and 177 to 180 (TLKT) each bind NAD(+). 3 residues coordinate Zn(2+): E192, H257, and H274.

The protein belongs to the sugar phosphate cyclases superfamily. Dehydroquinate synthase family. The cofactor is Co(2+). It depends on Zn(2+) as a cofactor. NAD(+) serves as cofactor.

The protein localises to the cytoplasm. It carries out the reaction 7-phospho-2-dehydro-3-deoxy-D-arabino-heptonate = 3-dehydroquinate + phosphate. It functions in the pathway metabolic intermediate biosynthesis; chorismate biosynthesis; chorismate from D-erythrose 4-phosphate and phosphoenolpyruvate: step 2/7. Its function is as follows. Catalyzes the conversion of 3-deoxy-D-arabino-heptulosonate 7-phosphate (DAHP) to dehydroquinate (DHQ). In Acaryochloris marina (strain MBIC 11017), this protein is 3-dehydroquinate synthase.